The primary structure comprises 267 residues: MVFEEFNNFDEAFSALLSKLDFKINEPFNDVKKVLCIEPHPDDCAIGLGGTIKKLTDSGIDVVYLLLTDGSMGTTDGEVSGHELALRRLEEEKRSAEILGVKKIHALDFGDTELPYTREVRKEIVTVIRKERPGIVLMPDPWLPYEGHPDHRHAGFLGIEAVSFAGLPNFNRSDLIAGLDPHSIQAVGFYYTHKPNYFVDISDVMEVKLRAVRTHESQFPEDVWELWEPYLRTIALYYGKMSGHRYAEGIRFVPGIFLHICPFAHVI.

The protein belongs to the PIGL family. As to quaternary structure, homohexamer.

It is found in the cytoplasm. It carries out the reaction N,N'-diacetylchitobiose + H2O = beta-D-glucosaminyl-(1-&gt;4)-N-acetyl-D-glucosamine + acetate. The protein operates within glycan degradation; chitin degradation. Its function is as follows. Deacylates the non-reducing end of diacetylchitobiose (GlcNAc2). Can also use N-acetylglucosamine (GlcNAc) and N-acetylchitotriose (GlcNAc3). Probably involved in chitin degradation. This is Diacetylchitobiose deacetylase (dac) from Thermococcus kodakarensis (strain ATCC BAA-918 / JCM 12380 / KOD1) (Pyrococcus kodakaraensis (strain KOD1)).